We begin with the raw amino-acid sequence, 223 residues long: MANRGHTQPRALAWALGLTLVWILLGACGGSRPLPALSRRHHRLAADLGTGQLHLAEMDTPEASGPGMVSEHCGKPSPGCESFLGHLQVALHNRFRLLLLGIRQAQPLCSELCDIWFATCESDITCGPTWLPLLEKRGCEPRCTTYEQTFADGADLCRSVLGYALPVAAPGADHCLNISISVLPGSRQERKAQEVTFPRSRRSRTWILDAPGSGSGSGSGSGP.

A signal peptide spans 1-30; the sequence is MANRGHTQPRALAWALGLTLVWILLGACGG. 4 disulfide bridges follow: C73–C143, C80–C120, C113–C157, and C126–C139.

This sequence belongs to the folate receptor family. Post-translationally, not N-glycosylated.

The protein resides in the secreted. The protein localises to the extracellular space. Its subcellular location is the extracellular matrix. It localises to the interphotoreceptor matrix. It is found in the cell membrane. In terms of biological role, riboflavin-binding protein which might have a role in retinal flavin transport. The chain is Retbindin (RTBDN) from Canis lupus familiaris (Dog).